Reading from the N-terminus, the 147-residue chain is Large ribosomal subunit protein bL21 (147 aa).

The segment at 125-147 is disordered; that stretch reads EEVEAAPKAKKAAPKAKKEATKE.

Belongs to the bacterial ribosomal protein bL21 family. In terms of assembly, part of the 50S ribosomal subunit. Contacts protein L20.

Functionally, this protein binds to 23S rRNA in the presence of protein L20. This is Large ribosomal subunit protein bL21 from Flavobacterium johnsoniae (strain ATCC 17061 / DSM 2064 / JCM 8514 / BCRC 14874 / CCUG 350202 / NBRC 14942 / NCIMB 11054 / UW101) (Cytophaga johnsonae).